The following is a 278-amino-acid chain: MRCLKSFRHGFTLGTNCYEPGAKRPRGDRSTVGGWSHGSTSRNIAFLRSIDEAKLTGHALALTLTVRDCPDTSDDWYKVRRAFEMRLRRLGLIRMHWVIEWQRRGVPHLHCAAFFDDTAPALLPAVIMRSWCDLVSDYNASPLSQYVLPITDAIGWFQYVSKHAARGVNHYQRSPENIPPQWQKKTGRMWGKVGEWPVVEKAEIFMGDATFYQLRRIVKRWRFADARASGSIHRIRSAKKYLQVPETLSRVLGASEWMPENELLSILYFLKSQGYEFL.

It belongs to the inovirus G2P protein family.

It carries out the reaction ATP + (deoxyribonucleotide)n-3'-hydroxyl + 5'-phospho-(deoxyribonucleotide)m = (deoxyribonucleotide)n+m + AMP + diphosphate.. Functionally, isoform G2P plays an essential role in viral DNA replication. Binds the origin of replication and cleaves the dsDNA replicative form I (RFI) and becomes covalently bound to it via phosphotyrosine bond, generating the dsDNA replicative form II (RFII). In turn, viral DNA replication initiates at the 3'-OH of the cleavage site. After one round of rolling circle synthesis, protein G2P is linked to the newly synthesized ssDNA and joins the ends of the displaced strand to generate a circular single-stranded molecule ready to be packed into a virion. Its function is as follows. Isoform G10P protein binds to double-stranded DNA and prevents hydrolysis by nucleases. Additionally, G10P is an inhibitor of DNA replication and may have a role in the transition from semiconservative replicative form DNA replication to single-stranded DNA synthesis in the life cycle. The sequence is that of Replication-associated protein G2P (II) from Pseudomonas aeruginosa (Bacteriophage Pf3).